The sequence spans 679 residues: Sodium-dependent phosphate transporter 1 (679 aa).

A run of 6 helical transmembrane segments spans residues Tyr21–Ala41, Ala62–Ser82, Gly100–Ala120, Ile158–Phe178, Ala203–Phe223, and Gly230–Val250. A phosphoserine mark is found at Ser265 and Ser269. 4 consecutive transmembrane segments (helical) span residues Val511–Gly531, Val558–Val578, Phe600–Ile620, and Ile650–Ala670. Residues Asp550–Val558 form an a region.

It belongs to the inorganic phosphate transporter (PiT) (TC 2.A.20) family. Ubiquitously expressed.

It is found in the cell membrane. The catalysed reaction is 2 Na(+)(out) + phosphate(out) = 2 Na(+)(in) + phosphate(in). In terms of biological role, sodium-phosphate symporter which preferentially transports the monovalent form of phosphate with a stoichiometry of two sodium ions per phosphate ion. May play a role in extracellular matrix and cartilage calcification as well as in vascular calcification. Essential for cell proliferation but this function is independent of its phosphate transporter activity. Its function is as follows. (Microbial infection) May function as a retroviral receptor as it confers human cells susceptibility to infection to Gibbon Ape Leukemia Virus (GaLV), Simian sarcoma-associated virus (SSAV) and Feline leukemia virus subgroup B (FeLV-B) as well as 10A1 murine leukemia virus (10A1 MLV). In Homo sapiens (Human), this protein is Sodium-dependent phosphate transporter 1 (SLC20A1).